The following is a 253-amino-acid chain: Ubiquinone biosynthesis O-methyltransferase (253 aa).

S-adenosyl-L-methionine is bound by residues arginine 41, glycine 72, aspartate 93, and leucine 136.

It belongs to the methyltransferase superfamily. UbiG/COQ3 family.

It catalyses the reaction a 3-demethylubiquinol + S-adenosyl-L-methionine = a ubiquinol + S-adenosyl-L-homocysteine + H(+). It carries out the reaction a 3-(all-trans-polyprenyl)benzene-1,2-diol + S-adenosyl-L-methionine = a 2-methoxy-6-(all-trans-polyprenyl)phenol + S-adenosyl-L-homocysteine + H(+). The protein operates within cofactor biosynthesis; ubiquinone biosynthesis. Functionally, O-methyltransferase that catalyzes the 2 O-methylation steps in the ubiquinone biosynthetic pathway. The protein is Ubiquinone biosynthesis O-methyltransferase of Azorhizobium caulinodans (strain ATCC 43989 / DSM 5975 / JCM 20966 / LMG 6465 / NBRC 14845 / NCIMB 13405 / ORS 571).